A 451-amino-acid polypeptide reads, in one-letter code: UDP-glycosyltransferase 76C4 (451 aa).

Residues Ser-273, 332 to 334 (APQ), 349 to 357 (HNGWNSTVE), and 371 to 374 (RWDQ) each bind UDP-alpha-D-glucose.

The protein belongs to the UDP-glycosyltransferase family.

The sequence is that of UDP-glycosyltransferase 76C4 (UGT76C4) from Arabidopsis thaliana (Mouse-ear cress).